Reading from the N-terminus, the 289-residue chain is Glyceraldehyde-3-phosphate dehydrogenase (289 aa).

The NAD(+) site is built by Asp-12 and Arg-57. D-glyceraldehyde 3-phosphate contacts are provided by residues 128-130 (SCT), Thr-159, 188-189 (TG), and Arg-211. Cys-129 functions as the Nucleophile in the catalytic mechanism.

The protein belongs to the glyceraldehyde-3-phosphate dehydrogenase family. In terms of assembly, homotetramer.

The protein localises to the cytoplasm. The enzyme catalyses D-glyceraldehyde 3-phosphate + phosphate + NAD(+) = (2R)-3-phospho-glyceroyl phosphate + NADH + H(+). The protein operates within carbohydrate degradation; glycolysis; pyruvate from D-glyceraldehyde 3-phosphate: step 1/5. This chain is Glyceraldehyde-3-phosphate dehydrogenase (GPD), found in Amanita muscaria (Fly agaric).